The primary structure comprises 273 residues: SAGA-associated factor 29 homolog B (273 aa).

In terms of domain architecture, SGF29 C-terminal spans 128–273; the sequence is EAYASLKGEQ…VVALPEGHRQ (146 aa). Histone H3K4me3 N-terminus binding stretches follow at residues 171–173 and 220–223; these read DEE and GTTA. The tract at residues 245-248 is histone H3K4me3 binding; it reads FDDD.

Belongs to the SGF29 family. In terms of tissue distribution, expressed in roots, rosette leaves, cauline leaves, stems and flowers.

It is found in the nucleus. Its function is as follows. Chromatin reader component of the transcription regulatory histone acetylation (HAT) complex SAGA. This is SAGA-associated factor 29 homolog B from Arabidopsis thaliana (Mouse-ear cress).